The sequence spans 419 residues: Protein FAM217A (419 aa).

4 disordered regions span residues 1–23 (MGRKSNESCSANPHSSSISQENL), 100–119 (DKRNSSVEENVTDESDLSES), 234–298 (PSSS…SRSL), and 362–388 (PIPLSFPENPREEVKVPRTKKKCHRKS). The segment covering 7–23 (ESCSANPHSSSISQENL) has biased composition (polar residues). Positions 284 to 298 (SLSTAGKSKSNSRSL) are enriched in polar residues. A compositionally biased stretch (basic residues) spans 378-388 (PRTKKKCHRKS).

The protein belongs to the FAM217 family.

In Rattus norvegicus (Rat), this protein is Protein FAM217A (Fam217a).